Consider the following 558-residue polypeptide: uncharacterized protein (558 aa).

12 consecutive transmembrane segments (helical) span residues 21–41 (IFCFYIYCILFGSLLLFLPIA), 69–89 (FLDALFLSTSAFSDTGLSTVV), 100–120 (IVLAVLLQLGGIGFVVIAFLA), 160–180 (IIFLFIVELIYGFLYGILFYF), 220–240 (AFQAGFFHSLSAVNNAGIDLI), 251–271 (GLGIIIQWLTISQIIFGGIGY), 303–323 (VITNIVVILLFFTLLLMVEFI), 386–406 (VFPVASEIQTTKIIIALAMFI), 413–433 (TAGGIRTTTLAVIFLALVAKF), 454–474 (AFLVLIISLIAVLLTAVLLPL), 479–499 (PVSFIDALFETTSAFGTVGLS), and 519–539 (ALCLLMVMGQVGVSSSVLTFV).

It belongs to the TrkH potassium transport family.

It is found in the cell membrane. This is an uncharacterized protein from Mycoplasma genitalium (strain ATCC 33530 / DSM 19775 / NCTC 10195 / G37) (Mycoplasmoides genitalium).